The primary structure comprises 381 residues: Arf-GAP with dual PH domain-containing protein 2 (381 aa).

The Arf-GAP domain maps to 9-131 (KRLLELLRAP…FMADGETISL (123 aa)). Residues 25–48 (CADCGAADPDWASYKLGIFICLNC) form a C4-type zinc finger. PH domains are found at residues 132-233 (PGNR…AARL) and 255-361 (NYLK…GVLS).

Highly expressed in placenta, spleen, kidney, skeletal muscle and adrenal gland. Weakly expressed in thyroid, liver, heart, lung, small intestine, peripheral blood leukocytes. Not detected in spinal cord, brain, stomach, trachea, colon, lymph node and bone marrow.

The protein resides in the cytoplasm. Its subcellular location is the cell membrane. In terms of biological role, GTPase-activating protein for the ADP ribosylation factor family (Potential). Binds phosphatidylinositol 3,4,5-trisphosphate (PtdInsP3) and inositol 1,3,4,5-tetrakisphosphate (InsP4). Possesses a stoichiometry of two binding sites for InsP4 with identical affinity. This Homo sapiens (Human) protein is Arf-GAP with dual PH domain-containing protein 2 (ADAP2).